Reading from the N-terminus, the 589-residue chain is Probable 9-cis-epoxycarotenoid dioxygenase NCED5, chloroplastic (589 aa).

A chloroplast-targeting transit peptide spans 1 to 45; that stretch reads MACSYILTPNPTKLNLSFAPSDLDAPSPSSSVSFTNTKPRRRKLS. Low complexity predominate over residues 21-34; the sequence is SDLDAPSPSSSVSF. A disordered region spans residues 21-51; the sequence is SDLDAPSPSSSVSFTNTKPRRRKLSANSVSD. Positions 287, 336, 401, and 576 each coordinate Fe cation.

This sequence belongs to the carotenoid oxygenase family. As to quaternary structure, interacts in vitro with VAR3. Requires Fe(2+) as cofactor. As to expression, detected only in seeds.

It localises to the plastid. The protein localises to the chloroplast thylakoid membrane. It catalyses the reaction a 9-cis-epoxycarotenoid + O2 = a 12'-apo-carotenal + 2-cis,4-trans-xanthoxin. It carries out the reaction 9-cis-violaxanthin + O2 = (3S,5R,6S)-5,6-epoxy-3-hydroxy-5,6-dihydro-12'-apo-beta-caroten-12'-al + 2-cis,4-trans-xanthoxin. The enzyme catalyses 9'-cis-neoxanthin + O2 = (3S,5R,6R)-3,5-dihydroxy-6,7-didehydro-5,6-dihydro-12'-apo-beta-caroten-12'-al + 2-cis,4-trans-xanthoxin. Functionally, has a 11,12(11',12') 9-cis epoxycarotenoid cleavage activity. Catalyzes the first step of abscisic-acid biosynthesis from carotenoids. The sequence is that of Probable 9-cis-epoxycarotenoid dioxygenase NCED5, chloroplastic (NCED5) from Arabidopsis thaliana (Mouse-ear cress).